Consider the following 119-residue polypeptide: MAFDPASLTYDARGLVPAIAQDHATGEVLMMAWMNAEAVARTLETGRVTYWSRSRQSFWVKGETSGHIQRLVELRIDCDRDCLLLLIEQVGPACHTHRRSCFYTAVREGAEQVFLDPMG.

Asp77 contributes to the Mg(2+) binding site. Cys78 contributes to the Zn(2+) binding site. The Mg(2+) site is built by Asp79 and Asp81. The Zn(2+) site is built by Cys94 and Cys101.

The protein belongs to the PRA-CH family. In terms of assembly, homodimer. Mg(2+) serves as cofactor. The cofactor is Zn(2+).

It localises to the cytoplasm. The enzyme catalyses 1-(5-phospho-beta-D-ribosyl)-5'-AMP + H2O = 1-(5-phospho-beta-D-ribosyl)-5-[(5-phospho-beta-D-ribosylamino)methylideneamino]imidazole-4-carboxamide. It functions in the pathway amino-acid biosynthesis; L-histidine biosynthesis; L-histidine from 5-phospho-alpha-D-ribose 1-diphosphate: step 3/9. In terms of biological role, catalyzes the hydrolysis of the adenine ring of phosphoribosyl-AMP. This is Phosphoribosyl-AMP cyclohydrolase from Cereibacter sphaeroides (strain ATCC 17025 / ATH 2.4.3) (Rhodobacter sphaeroides).